The following is a 152-amino-acid chain: Regulatory protein RecX (152 aa).

This sequence belongs to the RecX family.

It localises to the cytoplasm. Functionally, modulates RecA activity. The polypeptide is Regulatory protein RecX (Chromobacterium violaceum (strain ATCC 12472 / DSM 30191 / JCM 1249 / CCUG 213 / NBRC 12614 / NCIMB 9131 / NCTC 9757 / MK)).